A 602-amino-acid chain; its full sequence is 4-hydroxy-3-methylbut-2-en-1-yl diphosphate synthase (flavodoxin) (602 aa).

[4Fe-4S] cluster-binding residues include Cys508, Cys511, Cys543, and Glu550.

This sequence belongs to the IspG family. [4Fe-4S] cluster serves as cofactor.

It carries out the reaction (2E)-4-hydroxy-3-methylbut-2-enyl diphosphate + oxidized [flavodoxin] + H2O + 2 H(+) = 2-C-methyl-D-erythritol 2,4-cyclic diphosphate + reduced [flavodoxin]. It participates in isoprenoid biosynthesis; isopentenyl diphosphate biosynthesis via DXP pathway; isopentenyl diphosphate from 1-deoxy-D-xylulose 5-phosphate: step 5/6. Converts 2C-methyl-D-erythritol 2,4-cyclodiphosphate (ME-2,4cPP) into 1-hydroxy-2-methyl-2-(E)-butenyl 4-diphosphate. This chain is 4-hydroxy-3-methylbut-2-en-1-yl diphosphate synthase (flavodoxin), found in Chlamydia trachomatis serovar D (strain ATCC VR-885 / DSM 19411 / UW-3/Cx).